The primary structure comprises 298 residues: Protein pxr1 (298 aa).

A compositionally biased stretch (basic residues) spans methionine 1–lysine 11. A disordered region spans residues methionine 1–arginine 23. The G-patch domain occupies threonine 25–glycine 79. Positions leucine 145 to glycine 274 are disordered. Over residues valine 151–asparagine 164 the composition is skewed to polar residues. Basic residues predominate over residues arginine 199–lysine 222. Over residues glycine 247–serine 256 the composition is skewed to polar residues.

This sequence belongs to the PINX1 family.

The protein localises to the nucleus. Its subcellular location is the nucleolus. Its function is as follows. Involved in rRNA-processing at A0, A1 and A2 sites and negatively regulates telomerase. This is Protein pxr1 (pxr1) from Aspergillus terreus (strain NIH 2624 / FGSC A1156).